The following is a 444-amino-acid chain: Tol-Pal system protein TolB (444 aa).

The signal sequence occupies residues 1–19 (MRNIIYFILSLLFSVTSYA).

The protein belongs to the TolB family. In terms of assembly, the Tol-Pal system is composed of five core proteins: the inner membrane proteins TolA, TolQ and TolR, the periplasmic protein TolB and the outer membrane protein Pal. They form a network linking the inner and outer membranes and the peptidoglycan layer.

The protein localises to the periplasm. In terms of biological role, part of the Tol-Pal system, which plays a role in outer membrane invagination during cell division and is important for maintaining outer membrane integrity. This is Tol-Pal system protein TolB from Rickettsia rickettsii (strain Iowa).